The primary structure comprises 574 residues: Probable amino-acid permease meu22 (574 aa).

The next 9 helical transmembrane spans lie at 69-89 (MIAIGGCVGTGLFVGSGNALA), 94-114 (ASILIAFAVIGTYVLFTTSAL), 173-193 (GPVSIWISVFYVIIIAINIWG), 202-222 (FFLSIMKVISVIGFVILSIII), 291-311 (IFWRIFLFYIVALFMLTLVVP), 391-411 (PIYAIAVTLLFGSIAYFTEAG), 412-432 (VGGALFGWLLSICGLSTTFIW), 470-490 (GVAMTILALIAQFYVAVFPIG), and 498-518 (FFQAYMAAPILIISFVAWKFF).

The protein belongs to the amino acid-polyamine-organocation (APC) superfamily.

The protein resides in the membrane. In Schizosaccharomyces pombe (strain 972 / ATCC 24843) (Fission yeast), this protein is Probable amino-acid permease meu22 (meu22).